The chain runs to 218 residues: Adenylate kinase (218 aa).

ATP is bound at residue 10–15 (GAGKGT). An NMP region spans residues 30 to 59 (STGDMLRAAVKAGTPLGVEAKKIMDAGALV). Residues Thr-31, Arg-36, 57-59 (ALV), 85-88 (GFPR), and Gln-92 contribute to the AMP site. The interval 122-159 (GRRSHTASGRTYHVKYNPPKVEGKDDVTGEPLIQREDD) is LID. ATP is bound by residues Arg-123 and 132–133 (TY). 2 residues coordinate AMP: Arg-156 and Arg-167. Position 203 (Gly-203) interacts with ATP.

Belongs to the adenylate kinase family. In terms of assembly, monomer.

The protein localises to the cytoplasm. The catalysed reaction is AMP + ATP = 2 ADP. Its pathway is purine metabolism; AMP biosynthesis via salvage pathway; AMP from ADP: step 1/1. Catalyzes the reversible transfer of the terminal phosphate group between ATP and AMP. Plays an important role in cellular energy homeostasis and in adenine nucleotide metabolism. The protein is Adenylate kinase of Polaromonas sp. (strain JS666 / ATCC BAA-500).